The following is a 491-amino-acid chain: Ketol-acid reductoisomerase (NADP(+)) (491 aa).

The KARI N-terminal Rossmann domain maps to 14–208 (LDQLGRCRFM…GGHRAGVLES (195 aa)). NADP(+)-binding positions include 45-48 (CGAQ), R68, R76, S78, and 108-110 (DKQ). H132 is a catalytic residue. NADP(+) is bound at residue G158. KARI C-terminal knotted domains lie at 209–344 (SFVA…NAPK) and 345–485 (YEGK…MTDM). Residues D217, E221, E389, and E393 each contribute to the Mg(2+) site. S414 contributes to the substrate binding site.

This sequence belongs to the ketol-acid reductoisomerase family. The cofactor is Mg(2+).

The catalysed reaction is (2R)-2,3-dihydroxy-3-methylbutanoate + NADP(+) = (2S)-2-acetolactate + NADPH + H(+). The enzyme catalyses (2R,3R)-2,3-dihydroxy-3-methylpentanoate + NADP(+) = (S)-2-ethyl-2-hydroxy-3-oxobutanoate + NADPH + H(+). It functions in the pathway amino-acid biosynthesis; L-isoleucine biosynthesis; L-isoleucine from 2-oxobutanoate: step 2/4. It participates in amino-acid biosynthesis; L-valine biosynthesis; L-valine from pyruvate: step 2/4. In terms of biological role, involved in the biosynthesis of branched-chain amino acids (BCAA). Catalyzes an alkyl-migration followed by a ketol-acid reduction of (S)-2-acetolactate (S2AL) to yield (R)-2,3-dihydroxy-isovalerate. In the isomerase reaction, S2AL is rearranged via a Mg-dependent methyl migration to produce 3-hydroxy-3-methyl-2-ketobutyrate (HMKB). In the reductase reaction, this 2-ketoacid undergoes a metal-dependent reduction by NADPH to yield (R)-2,3-dihydroxy-isovalerate. In Pasteurella multocida (strain Pm70), this protein is Ketol-acid reductoisomerase (NADP(+)).